The sequence spans 124 residues: Small ribosomal subunit protein uS12cy (124 aa).

The protein belongs to the universal ribosomal protein uS12 family. In terms of assembly, part of the 30S ribosomal subunit.

Its subcellular location is the plastid. The protein resides in the chloroplast. Its function is as follows. With S4 and S5 plays an important role in translational accuracy. Located at the interface of the 30S and 50S subunits. In Olimarabidopsis pumila (Dwarf rocket), this protein is Small ribosomal subunit protein uS12cy (rps12-B).